We begin with the raw amino-acid sequence, 659 residues long: Beta-galactosidase BgaA (659 aa).

Arginine 103 provides a ligand contact to substrate. Residue cysteine 107 participates in Zn(2+) binding. Asparagine 141 is a binding site for substrate. Glutamate 142 (proton donor) is an active-site residue. 3 residues coordinate Zn(2+): cysteine 148, cysteine 150, and cysteine 153. Glutamate 298 functions as the Nucleophile in the catalytic mechanism. Substrate is bound at residue tryptophan 307.

The protein belongs to the glycosyl hydrolase 42 family. As to quaternary structure, dimer.

It carries out the reaction Hydrolysis of terminal non-reducing beta-D-galactose residues in beta-D-galactosides.. Its activity is regulated as follows. Inhibited by Cu(2+), Hg(2+) and Zn(2+). No effect with Ca(2+), Mg(2+), Mn(2+) or excess EDTA (10 mM). Its function is as follows. Involved in plant cell wall degradation in cooperation with cellulosome. Hydrolyzes both p-nitrophenyl-alpha-L-arabinopyranoside (pNPAp) and p-nitrophenyl-beta-D-galactopyranoside (pNPGp), with higher activity for pNPAp. Shows hydrolysis activity against p-nitrophenyl-beta-D-fucopyranoside (pNPFp), but not against p-nitrophenyl-alpha-L-arabinofuranoside (pNPAf), o-nitrophenyl-beta-D-galactopyranoside (oNPGp), p-nitrophenyl-beta-D-xylopyranoside (pNPXp), p-nitrophenyl-beta-D-glucopyranoside (pNPGLp), p-nitrophenyl-beta-D-cellobiopyranoside (pNPCp), p-nitrophenyl-beta-lactopyranoside (pNPLp) or p-nitrophenyl-alpha-galactopyranoside (pNPalphaGp). No detectable activity against arabinan or arabinoxylan, but activity against arabinogalactan can be detected. Increases degradation activity of alpha-L-arabinofuranosidase (ArfA) and endo-1,4-beta-xylanase (XynA) when corn fiber gum and corn stem powder are used as substrates. The sequence is that of Beta-galactosidase BgaA (bgaA) from Clostridium cellulovorans (strain ATCC 35296 / DSM 3052 / OCM 3 / 743B).